A 74-amino-acid chain; its full sequence is Ribosome modulation factor (74 aa).

It belongs to the ribosome modulation factor family.

The protein resides in the cytoplasm. In terms of biological role, during stationary phase, converts 70S ribosomes to an inactive dimeric form (100S ribosomes). This Cellvibrio japonicus (strain Ueda107) (Pseudomonas fluorescens subsp. cellulosa) protein is Ribosome modulation factor.